Here is a 307-residue protein sequence, read N- to C-terminus: Chlorophyll a-b binding protein 1, chloroplastic (307 aa).

Residues 1 to 44 (MAPYSVVASVLAAAPPQQSGSVRQLPSTINRAITQRSQSRHVAS) constitute a chloroplast transit peptide. The segment at 34-54 (TQRSQSRHVASASSASSPTTM) is disordered. Residues Thr-52, Glu-63, Ile-64, Gly-65, Tyr-68, Leu-81, Pro-86, Arg-89, Gly-90, Phe-91, and Asp-92 each contribute to the chlorophyll a site. A loroxanthin-binding site is contributed by Leu-96. Residues 111–143 (NYDESRLRWLLEGELYNGRLAMLAVVGVLTVEA) form a helical membrane-spanning segment. Residues Leu-120, Glu-124, Asn-127, Met-132, and Lys-146 each contribute to the chlorophyll a site. Trp-149 contacts loroxanthin. Residues Glu-151, Tyr-163, His-171, Glu-178, Arg-181, Glu-190, Arg-198, and Asp-200 each coordinate chlorophyll a. A helical transmembrane segment spans residues 161–186 (TPYVVAVVGGHLAFALLEKKRLENFR). Positions 200 and 202 each coordinate all-trans-violaxanthin. The chlorophyll a site is built by Leu-204, Asn-208, Tyr-214, Asn-215, Ala-218, Asn-222, and Arg-224. The chain crosses the membrane as a helical span at residues 213 to 238 (DYNRQAEVRNCRLAMLTFLGFSVQAW). Phe-230 lines the loroxanthin pocket. Phe-233 is a binding site for all-trans-violaxanthin. A chlorophyll a-binding site is contributed by Gln-236. Pro-244 lines the all-trans-violaxanthin pocket. Asn-247, His-251, Pro-255, Phe-256, Ala-258, Asn-259, Ile-260, and Phe-274 together coordinate chlorophyll a. Residues 265-289 (DRGTNVVAIFSAFAAVMHIAELARE) traverse the membrane as a helical segment.

This sequence belongs to the light-harvesting chlorophyll a/b-binding (LHC) protein family. As to quaternary structure, homooligomer. Component of a light-harvesting complex (LHC) consisting of 11 chlorophyll a-b binding proteins. Binds 11 chlorophylls (Chl-a and Chl-b) and the 2 carotenoids violaxanthin and loroxanthin. is required as a cofactor.

It localises to the plastid. The protein localises to the chloroplast thylakoid membrane. Functionally, component of a light-harvesting complex (LHC). The LHC functions as a light receptor, it captures and delivers excitation energy to photosystems with which it is closely associated. Functions in a far-red LHC by absorbing far-red light and promoting photosystem II (PSII) excitation, likely with entropy-driven uphill excitation energy transfer. Exhibits a typical absorption band at 671 nm (Qy band), as well as a large far-red absorption band at 706.5 together with fluorescence emission at around 713 nm (F713). The polypeptide is Chlorophyll a-b binding protein 1, chloroplastic (Prasiola crispa (Green alga)).